The sequence spans 192 residues: MRIGLLGGSFNPPHQAHRAISLFALKRLQLDRVWWLVTPGNPLKDNGGLHALAERAAAARKVAADPRIEISCLESVIGTRYTADTIDYLRRRASRLRFVWIMGADNLAQFHRWQKWQHIAAQVPMAVVDRPPRSFRALNAPAARALARYRLPEADAGRLADRAAPAWVYLTGLKLSLSSTGLRNPDGSWKSI.

It belongs to the NadD family.

The enzyme catalyses nicotinate beta-D-ribonucleotide + ATP + H(+) = deamido-NAD(+) + diphosphate. It functions in the pathway cofactor biosynthesis; NAD(+) biosynthesis; deamido-NAD(+) from nicotinate D-ribonucleotide: step 1/1. Functionally, catalyzes the reversible adenylation of nicotinate mononucleotide (NaMN) to nicotinic acid adenine dinucleotide (NaAD). The chain is Probable nicotinate-nucleotide adenylyltransferase from Bradyrhizobium sp. (strain BTAi1 / ATCC BAA-1182).